Consider the following 142-residue polypeptide: Galactose-binding lectin l-1 (142 aa).

Positions 3–134 (FVEVKNLIMK…DATVKNISVN (132 aa)) constitute a Galectin domain. 68 to 74 (WQEEQRD) serves as a coordination point for a beta-D-galactoside. Asn130 carries an N-linked (GlcNAc...) asparagine glycan.

Homodimer. Post-translationally, the N-terminus is blocked. As to expression, skin; highest expression in that of individuals showing resistance to infectious disease.

The protein resides in the secreted. Involved in host defense at the body surface. Causes agglutination of the Gram-positive bacterium S.difficile. Possesses calcium-independent hemagglutinating activity. This Anguilla japonica (Japanese eel) protein is Galactose-binding lectin l-1.